Here is a 231-residue protein sequence, read N- to C-terminus: Protein OPG061 (231 aa).

It belongs to the orthopoxvirus OPG058 family.

Its subcellular location is the host nucleus. It localises to the host nucleolus. This is Protein OPG061 (OPG061) from Homo sapiens (Human).